The sequence spans 61 residues: Small ribosomal subunit protein uS14 (61 aa).

Zn(2+)-binding residues include cysteine 24, cysteine 27, cysteine 40, and cysteine 43.

It belongs to the universal ribosomal protein uS14 family. Zinc-binding uS14 subfamily. Part of the 30S ribosomal subunit. Contacts proteins S3 and S10. Zn(2+) serves as cofactor.

Its function is as follows. Binds 16S rRNA, required for the assembly of 30S particles and may also be responsible for determining the conformation of the 16S rRNA at the A site. This is Small ribosomal subunit protein uS14 from Borreliella afzelii (strain PKo) (Borrelia afzelii).